The primary structure comprises 190 residues: METLTTFILCGGKSSRMQSEKGLVLFQHKPFIEHIIQAILPITEQIKLITASKEYDYLPYEKIPDLVLDKGPLGGIYTALSHSETEFNLILSCDIPLISTELLQELISKHTEEAGITVFASESKTHPLIGIYSKKILPIIKSAIEADELKMMDLLAKVPHQILNIEESENFHLTNINSADELNDLNINLS.

Residues 9–11 (LCG), K21, D65, and D94 contribute to the GTP site. D94 is a Mg(2+) binding site.

Belongs to the MobA family. Mg(2+) serves as cofactor.

Its subcellular location is the cytoplasm. It carries out the reaction Mo-molybdopterin + GTP + H(+) = Mo-molybdopterin guanine dinucleotide + diphosphate. Transfers a GMP moiety from GTP to Mo-molybdopterin (Mo-MPT) cofactor (Moco or molybdenum cofactor) to form Mo-molybdopterin guanine dinucleotide (Mo-MGD) cofactor. The polypeptide is Probable molybdenum cofactor guanylyltransferase (Flavobacterium johnsoniae (strain ATCC 17061 / DSM 2064 / JCM 8514 / BCRC 14874 / CCUG 350202 / NBRC 14942 / NCIMB 11054 / UW101) (Cytophaga johnsonae)).